The following is a 179-amino-acid chain: Large ribosomal subunit protein uL5c (179 aa).

It belongs to the universal ribosomal protein uL5 family. Part of the 50S ribosomal subunit; contacts the 5S rRNA.

It is found in the plastid. Binds 5S rRNA, forms part of the central protuberance of the 50S subunit. This chain is Large ribosomal subunit protein uL5c (rpl5), found in Euglena longa (Euglenophycean alga).